Here is a 274-residue protein sequence, read N- to C-terminus: Nitrogenase iron protein (274 aa).

8–15 contacts ATP; sequence GKGGIGKS. Cys-94 provides a ligand contact to [4Fe-4S] cluster. Arg-97 is subject to ADP-ribosylarginine; by dinitrogenase reductase ADP-ribosyltransferase. Cys-131 contacts [4Fe-4S] cluster.

Belongs to the NifH/BchL/ChlL family. As to quaternary structure, homodimer. [4Fe-4S] cluster serves as cofactor. Post-translationally, the reversible ADP-ribosylation of Arg-97 inactivates the nitrogenase reductase and regulates nitrogenase activity.

The catalysed reaction is N2 + 8 reduced [2Fe-2S]-[ferredoxin] + 16 ATP + 16 H2O = H2 + 8 oxidized [2Fe-2S]-[ferredoxin] + 2 NH4(+) + 16 ADP + 16 phosphate + 6 H(+). Its function is as follows. The key enzymatic reactions in nitrogen fixation are catalyzed by the nitrogenase complex, which has 2 components: the iron protein and the molybdenum-iron protein. This is Nitrogenase iron protein from Azobacteroides pseudotrichonymphae genomovar. CFP2.